Consider the following 178-residue polypeptide: Signal peptidase complex subunit 2 (178 aa).

The Cytoplasmic portion of the chain corresponds to 1-37 (MSSAKPINVYSIPELNQALDEALPSVFARLNYERSYA). A helical membrane pass occupies residues 38-58 (LLDAKLYIGYSIAVVAGLSFF). Over 59 to 67 (LDKKFERDQ) the chain is Lumenal. A helical transmembrane segment spans residues 68–88 (IVTYQKLLVGAYFVLSLLFWY). At 89 to 178 (FSRFIEKGTV…HNVLDTKKNE (90 aa)) the chain is on the cytoplasmic side.

This sequence belongs to the SPCS2 family. As to quaternary structure, component of the signal peptidase complex (SPC) composed of a catalytic subunit SEC11 and three accessory subunits SPC1, SPC2 and SPC3. The complex induces a local thinning of the ER membrane which is used to measure the length of the signal peptide (SP) h-region of protein substrates. This ensures the selectivity of the complex towards h-regions shorter than 18-20 amino acids. SPC associates with the translocon complex. Interacts with SBH1 and SEB2/SBH2.

It localises to the endoplasmic reticulum membrane. Its function is as follows. Component of the signal peptidase complex (SPC) which catalyzes the cleavage of N-terminal signal sequences from nascent proteins as they are translocated into the lumen of the endoplasmic reticulum. Enhances the enzymatic activity of SPC and facilitates the interactions between different components of the translocation site. This chain is Signal peptidase complex subunit 2 (SPC2), found in Saccharomyces cerevisiae (strain ATCC 204508 / S288c) (Baker's yeast).